A 211-amino-acid polypeptide reads, in one-letter code: MTIGVVGRKCGMTRIFTEEGVSIPVTVIEIEPNRVTQFKTEETDGYRAVQVTVGERRASRVTAAQAGHFAKANVAAGRGVWEFRLEEGEYQAGDLINAEIFAAGQLVDVTGQSKGKGFAGTIKRWNFRGQDNTHGNSVSHRVPGSIGQCQTPGRVFKGKKMSGHMGAERVTVQSLEVVRVDAERNLLLVKGAVPGATGGNLVVRPAAKARG.

The residue at position 150 (Gln150) is an N5-methylglutamine.

This sequence belongs to the universal ribosomal protein uL3 family. As to quaternary structure, part of the 50S ribosomal subunit. Forms a cluster with proteins L14 and L19. Methylated by PrmB.

In terms of biological role, one of the primary rRNA binding proteins, it binds directly near the 3'-end of the 23S rRNA, where it nucleates assembly of the 50S subunit. This Pseudomonas fluorescens (strain ATCC BAA-477 / NRRL B-23932 / Pf-5) protein is Large ribosomal subunit protein uL3.